We begin with the raw amino-acid sequence, 47 residues long: Large ribosomal subunit protein uL14c (47 aa).

It belongs to the universal ribosomal protein uL14 family. As to quaternary structure, part of the 50S ribosomal subunit.

Its subcellular location is the plastid. It localises to the chloroplast. Functionally, binds to 23S rRNA. The polypeptide is Large ribosomal subunit protein uL14c (rpl14) (Vigna unguiculata (Cowpea)).